We begin with the raw amino-acid sequence, 484 residues long: Zinc metalloproteinase-disintegrin BlatH1 (484 aa).

The N-terminal stretch at 1–20 is a signal peptide; it reads MIQVLLVTICLAALPYQGSS. A propeptide spanning residues 21–190 is cleaved from the precursor; that stretch reads IILESGNVND…KKASQSNLTP (170 aa). Glu-191 carries the pyrrolidone carboxylic acid (Glu) modification. Residues 199 to 395 enclose the Peptidase M12B domain; sequence KYVELVIVAD…QNSQCILNEP (197 aa). Glu-202 contacts Ca(2+). Asn-259 carries N-linked (GlcNAc...) asparagine glycosylation. Asp-286 lines the Ca(2+) pocket. An N-linked (GlcNAc...) asparagine glycan is attached at Asn-297. Disulfide bonds link Cys-310-Cys-390, Cys-350-Cys-374, and Cys-352-Cys-357. His-335 lines the Zn(2+) pocket. Residue Glu-336 is part of the active site. Zn(2+)-binding residues include His-339 and His-345. Residue Asn-373 is glycosylated (N-linked (GlcNAc...) asparagine). Ca(2+) contacts are provided by Cys-390, Asn-393, Val-405, Asn-408, Glu-412, Glu-415, and Asp-418. The 82-residue stretch at 403–484 folds into the Disintegrin domain; it reads PPVCGNEILE…GQSADCPSNG (82 aa). Disulfide bonds link Cys-406–Cys-425, Cys-417–Cys-435, Cys-419–Cys-430, Cys-429–Cys-452, Cys-443–Cys-449, Cys-448–Cys-473, and Cys-461–Cys-480. The TDN-tripeptide signature appears at 465-467; sequence TDN.

This sequence belongs to the venom metalloproteinase (M12B) family. P-II subfamily. P-IIc sub-subfamily. Homodimer. Zn(2+) serves as cofactor. Post-translationally, the N-terminus is blocked. Expressed by the venom gland.

The protein resides in the secreted. Platelet aggregation in inhibited by the metalloproteinase inhibitors EDTA and Batimastat. The hemorrhagic activity is not inhibited by the plasma proteinase inhibitor alpha2-macroglobulin, although the SVMP is able to cleave this plasma inhibitor, generating a 90 kDa product. In terms of biological role, snake venom zinc metalloprotease-disintegrin that hydrolyzes azocasein, gelatin and fibrinogen (Aalpha and Bbeta chains and partially gamma-chain), and exerts a potent local and systemic hemorrhagic activity in mice. It inhibits ADP- and collagen-induced human platelet aggregation (IC(50) = 0.3 uM and 0.7 uM for ADP and collagen, respectively). This inhibition is dependent of protease activity, and probably occurs through the degradation of an unknown platelet receptor. The protein is Zinc metalloproteinase-disintegrin BlatH1 of Bothriechis lateralis (Side-striped palm pitviper).